The chain runs to 511 residues: GMP synthase [glutamine-hydrolyzing] (511 aa).

The 191-residue stretch at 5-195 folds into the Glutamine amidotransferase type-1 domain; sequence DILVLDFGSQ…AKYACNCESV (191 aa). The Nucleophile role is filled by cysteine 82. Residues histidine 169 and glutamate 171 contribute to the active site. The 191-residue stretch at 196–386 folds into the GMPS ATP-PPase domain; the sequence is WNMGSFAKTQ…LGLSKEVVYR (191 aa). 223-229 contributes to the ATP binding site; sequence SGGVDSS.

In terms of assembly, homodimer.

It catalyses the reaction XMP + L-glutamine + ATP + H2O = GMP + L-glutamate + AMP + diphosphate + 2 H(+). It functions in the pathway purine metabolism; GMP biosynthesis; GMP from XMP (L-Gln route): step 1/1. Catalyzes the synthesis of GMP from XMP. This Campylobacter jejuni subsp. doylei (strain ATCC BAA-1458 / RM4099 / 269.97) protein is GMP synthase [glutamine-hydrolyzing].